Here is a 251-residue protein sequence, read N- to C-terminus: HTH-type transcriptional regulator UlaR (251 aa).

The 56-residue stretch at 3 to 58 (EAQRHQILLDMLAQLGFVTVENVIERLGISPATARRDINKLDESGKLKKVRNGAEA) folds into the HTH deoR-type domain. The segment at residues 20 to 39 (VTVENVIERLGISPATARRD) is a DNA-binding region (H-T-H motif).

Its subcellular location is the cytoplasm. Functionally, represses ulaG and the ulaABCDEF operon. This is HTH-type transcriptional regulator UlaR from Salmonella arizonae (strain ATCC BAA-731 / CDC346-86 / RSK2980).